Reading from the N-terminus, the 736-residue chain is Phosphoribosylformylglycinamidine synthase subunit PurL (736 aa).

Residue H49 is part of the active site. The ATP site is built by Y52 and K91. Mg(2+) is bound at residue E93. Substrate-binding positions include S94 to H97 and R116. H95 (proton acceptor) is an active-site residue. D117 contributes to the Mg(2+) binding site. Substrate is bound at residue Q240. D268 is a Mg(2+) binding site. E312–Q314 provides a ligand contact to substrate. ATP-binding residues include D493 and G530. Mg(2+) is bound at residue N531. S533 contacts substrate.

It belongs to the FGAMS family. Monomer. Part of the FGAM synthase complex composed of 1 PurL, 1 PurQ and 2 PurS subunits.

The protein resides in the cytoplasm. It catalyses the reaction N(2)-formyl-N(1)-(5-phospho-beta-D-ribosyl)glycinamide + L-glutamine + ATP + H2O = 2-formamido-N(1)-(5-O-phospho-beta-D-ribosyl)acetamidine + L-glutamate + ADP + phosphate + H(+). Its pathway is purine metabolism; IMP biosynthesis via de novo pathway; 5-amino-1-(5-phospho-D-ribosyl)imidazole from N(2)-formyl-N(1)-(5-phospho-D-ribosyl)glycinamide: step 1/2. Part of the phosphoribosylformylglycinamidine synthase complex involved in the purines biosynthetic pathway. Catalyzes the ATP-dependent conversion of formylglycinamide ribonucleotide (FGAR) and glutamine to yield formylglycinamidine ribonucleotide (FGAM) and glutamate. The FGAM synthase complex is composed of three subunits. PurQ produces an ammonia molecule by converting glutamine to glutamate. PurL transfers the ammonia molecule to FGAR to form FGAM in an ATP-dependent manner. PurS interacts with PurQ and PurL and is thought to assist in the transfer of the ammonia molecule from PurQ to PurL. This Rhodopseudomonas palustris (strain BisB5) protein is Phosphoribosylformylglycinamidine synthase subunit PurL.